The chain runs to 601 residues: Sulfite reductase [NADPH] flavoprotein alpha-component (601 aa).

The region spanning 64–202 is the Flavodoxin-like domain; sequence ITLISASQTG…AAQEWRARVV (139 aa). FMN contacts are provided by residues 70–75, 117–120, and 153–162; these read SQTGNA, STQG, and LGDTSYEFFC. The FAD-binding FR-type domain occupies 236-450; sequence EAPLSASLAV…IEHNDNFRLP (215 aa). FAD contacts are provided by residues Thr-324, Ala-358, 388–391, 406–408, Tyr-412, and 421–424; these read RLYS, TVG, and GGAS. Residues 521-522, 527-531, and Asp-563 contribute to the NADP(+) site; these read SR and KIYVQ. An FAD-binding site is contributed by Tyr-601.

It belongs to the NADPH-dependent sulphite reductase flavoprotein subunit CysJ family. The protein in the N-terminal section; belongs to the flavodoxin family. In the C-terminal section; belongs to the flavoprotein pyridine nucleotide cytochrome reductase family. Alpha(8)-beta(8). The alpha component is a flavoprotein, the beta component is a hemoprotein. It depends on FAD as a cofactor. Requires FMN as cofactor.

It catalyses the reaction hydrogen sulfide + 3 NADP(+) + 3 H2O = sulfite + 3 NADPH + 4 H(+). It participates in sulfur metabolism; hydrogen sulfide biosynthesis; hydrogen sulfide from sulfite (NADPH route): step 1/1. Functionally, component of the sulfite reductase complex that catalyzes the 6-electron reduction of sulfite to sulfide. This is one of several activities required for the biosynthesis of L-cysteine from sulfate. The flavoprotein component catalyzes the electron flow from NADPH -&gt; FAD -&gt; FMN to the hemoprotein component. The polypeptide is Sulfite reductase [NADPH] flavoprotein alpha-component (Citrobacter koseri (strain ATCC BAA-895 / CDC 4225-83 / SGSC4696)).